Here is a 379-residue protein sequence, read N- to C-terminus: Tryptophan 2,3-dioxygenase (379 aa).

Substrate-binding positions include 57-61 (FIITH) and R128. H312 contacts heme. Residue T327 participates in substrate binding.

The protein belongs to the tryptophan 2,3-dioxygenase family. In terms of assembly, homotetramer. Dimer of dimers. Requires heme as cofactor.

It catalyses the reaction L-tryptophan + O2 = N-formyl-L-kynurenine. It functions in the pathway amino-acid degradation; L-tryptophan degradation via kynurenine pathway; L-kynurenine from L-tryptophan: step 1/2. Its pathway is pigment biosynthesis; ommochrome biosynthesis. Heme-dependent dioxygenase that catalyzes the oxidative cleavage of the L-tryptophan (L-Trp) pyrrole ring and converts L-tryptophan to N-formyl-L-kynurenine. Catalyzes the oxidative cleavage of the indole moiety. The polypeptide is Tryptophan 2,3-dioxygenase (Drosophila erecta (Fruit fly)).